The chain runs to 379 residues: Cytochrome b (379 aa).

Transmembrane regions (helical) follow at residues phenylalanine 33–methionine 53, tryptophan 77–valine 98, tryptophan 113–leucine 133, and phenylalanine 178–leucine 198. 2 residues coordinate heme b: histidine 83 and histidine 97. Residues histidine 182 and histidine 196 each contribute to the heme b site. Residue histidine 201 participates in a ubiquinone binding. The next 4 helical transmembrane spans lie at threonine 226–phenylalanine 246, leucine 288–asparagine 308, isoleucine 320–glycine 340, and phenylalanine 347–proline 367.

The protein belongs to the cytochrome b family. As to quaternary structure, the cytochrome bc1 complex contains 11 subunits: 3 respiratory subunits (MT-CYB, CYC1 and UQCRFS1), 2 core proteins (UQCRC1 and UQCRC2) and 6 low-molecular weight proteins (UQCRH/QCR6, UQCRB/QCR7, UQCRQ/QCR8, UQCR10/QCR9, UQCR11/QCR10 and a cleavage product of UQCRFS1). This cytochrome bc1 complex then forms a dimer. Heme b serves as cofactor.

It localises to the mitochondrion inner membrane. Functionally, component of the ubiquinol-cytochrome c reductase complex (complex III or cytochrome b-c1 complex) that is part of the mitochondrial respiratory chain. The b-c1 complex mediates electron transfer from ubiquinol to cytochrome c. Contributes to the generation of a proton gradient across the mitochondrial membrane that is then used for ATP synthesis. This Akodon spegazzinii (Spegazzini's grass mouse) protein is Cytochrome b (MT-CYB).